The primary structure comprises 378 residues: Cytochrome b (378 aa).

Helical transmembrane passes span 35–55, 79–101, 114–134, and 180–200; these read FGSLLGLVLSIQLVTGIFLAM, WIIRLVHANGASFFFICLYCHIG, TWIMGVLLFILVMAAAFLGYV, and FFSLHFLVPFLVSLGAMLHIF. Heme b-binding residues include His85 and His99. 2 residues coordinate heme b: His184 and His198. His203 is a binding site for a ubiquinone. 4 helical membrane-spanning segments follow: residues 226 to 246, 290 to 310, 326 to 346, and 350 to 370; these read YSAKDLLGFFFMFFFIIFISF, LGGVLGLLCALLVLFSLPLTH, FFWLFIVSFLMLTIGGGQPVC, and VMCSQVWSCLYFTYFILCGPL.

It belongs to the cytochrome b family. In terms of assembly, the main subunits of complex b-c1 are: cytochrome b, cytochrome c1 and the Rieske protein. It depends on heme b as a cofactor.

It localises to the mitochondrion inner membrane. In terms of biological role, component of the ubiquinol-cytochrome c reductase complex (complex III or cytochrome b-c1 complex) that is part of the mitochondrial respiratory chain. The b-c1 complex mediates electron transfer from ubiquinol to cytochrome c. Contributes to the generation of a proton gradient across the mitochondrial membrane that is then used for ATP synthesis. The sequence is that of Cytochrome b (mt:Cyt-b) from Paraspadella gotoi (Arrow worm).